Reading from the N-terminus, the 541-residue chain is Putative transferase YhbX (541 aa).

The Periplasmic segment spans residues 1–60 (MTVFNKFARTFKSHWLLYLCVIVFGITNLVASSGAHMVQRLLFFVLTILVVKRISSLPLR). The chain crosses the membrane as a helical span at residues 61 to 81 (LLVAAPFVLLTAADMSISLYS). The Cytoplasmic portion of the chain corresponds to 82-110 (WCTFGTTFNDGFAISVLQSDPDEVVKMLG). Residues 111–131 (MYIPYLCAFAFLSLLFLAVII) form a helical membrane-spanning segment. Topologically, residues 132–141 (KYDVSLPTKK) are periplasmic. Residues 142–162 (VTGILLLIVISGSLFSACQFA) traverse the membrane as a helical segment. Residues 163 to 264 (YKDAKNKKAF…RKQIKLFNQA (102 aa)) are Cytoplasmic-facing. A helical transmembrane segment spans residues 265 to 285 (ISGAPYTALSVPLSLTADSVL). Residues 286–541 (SHDIHNYPDN…QGNPTPEGQG (256 aa)) are Periplasmic-facing.

It belongs to the phosphoethanolamine transferase family.

It localises to the cell inner membrane. Functionally, probably does not transfer phosphoethanolamine to lipid A. The protein is Putative transferase YhbX (yhbX) of Escherichia coli (strain K12).